A 338-amino-acid chain; its full sequence is MIHKNWAELIKPTQLVVKPGADPARVATVIAEPLERGFGLTLGNALRRVLLSSLQGAAITSVQIDNVLHEFSSVAGVREDVTDIVLNLKGVSIKMEVEGPKRLSISAKGPGVVTAGDISESNGIEILNKDHVICHLDEGADVFMELTVNTGKGYVAADKNRPEDAPIGLIPIDAIYSPVKKVSYEVTPTREGQVLDYDKLTMRIETDGGLTPDDAVAYAARILQDQLSIFVNFEEPESATRHDVEDGLEFNPLLLKKVDELELSVRSANCLKNDNIVYIGDLIQKTEAEMLRTPNFGRKSLNEIKEVLSGMGLHLGMDVEDWPPENIEDLAKRFEDQF.

The segment at 1–234 is alpha N-terminal domain (alpha-NTD); the sequence is MIHKNWAELI…DQLSIFVNFE (234 aa). The alpha C-terminal domain (alpha-CTD) stretch occupies residues 250–338; sequence FNPLLLKKVD…DLAKRFEDQF (89 aa).

The protein belongs to the RNA polymerase alpha chain family. In terms of assembly, homodimer. The RNAP catalytic core consists of 2 alpha, 1 beta, 1 beta' and 1 omega subunit. When a sigma factor is associated with the core the holoenzyme is formed, which can initiate transcription.

The enzyme catalyses RNA(n) + a ribonucleoside 5'-triphosphate = RNA(n+1) + diphosphate. Functionally, DNA-dependent RNA polymerase catalyzes the transcription of DNA into RNA using the four ribonucleoside triphosphates as substrates. This Cereibacter sphaeroides (strain ATCC 17029 / ATH 2.4.9) (Rhodobacter sphaeroides) protein is DNA-directed RNA polymerase subunit alpha.